The chain runs to 417 residues: MGEDAAQAEKFQHPNTDMLQEKPSNPSPMPSSTPSPSLNLGSTEEAIRDNSQVNAVTVHTLLDKLVNMLDAVRENQHNMEQRQINLEGSVKGIQNDLTKLSKYQASTSNTVSKLLEKSRKVSAHTRAVRERLEKQCVQVKRLENNHAQLLRRNHFKVLIFQEESEIPASVFVKEPVPSTAEGKELADENKSLEETLHNVDLSSDDELPGDEEALEDSAEEKMEESRAEKIKRSSLKKVDSLKKAFSRQNIEKKMNKLGTKIVSVERREKIKKSLTPNHQKASSGKSSPFKVSPLSFGRKKIREGESSAENETKLEEQVQDDHEEGSFTEGLSEASLPSGLLEGSAEDAEKSALRGNNSGVGSNADLTIEEDEEEESVALQQAQQVRYESGYMLNSKEMEESSEKHVQAAVLHVDQTA.

Residues 1–42 are disordered; the sequence is MGEDAAQAEKFQHPNTDMLQEKPSNPSPMPSSTPSPSLNLGS. Gly2 is modified (N-acetylglycine). Positions 2-168 are interaction with CAVIN1; it reads GEDAAQAEKF…IFQEESEIPA (167 aa). Phosphoserine occurs at positions 27, 35, 37, and 51. Coiled-coil stretches lie at residues 61–87 and 126–267; these read LLDK…INLE and RAVR…VERR. The interval 62 to 100 is leucine-zipper; the sequence is LDKLVNMLDAVRENQHNMEQRQINLEGSVKGIQNDLTKL. Position 195 is a phosphothreonine (Thr195). Disordered stretches follow at residues 198-242 and 256-381; these read NVDL…DSLK and KLGT…ALQQ. 3 positions are modified to phosphoserine: Ser202, Ser203, and Ser217. Over residues 202–218 the composition is skewed to acidic residues; that stretch reads SSDDELPGDEEALEDSA. Basic and acidic residues predominate over residues 219–242; it reads EEKMEESRAEKIKRSSLKKVDSLK. Residues 274-286 are compositionally biased toward polar residues; sequence LTPNHQKASSGKS. Phosphoserine occurs at positions 282, 283, 286, 287, 292, and 295. Residues 302–320 show a composition bias toward basic and acidic residues; it reads REGESSAENETKLEEQVQD. Phosphoserine is present on residues Ser326, Ser335, Ser358, and Ser362. Over residues 354–365 the composition is skewed to polar residues; sequence RGNNSGVGSNAD. The residue at position 367 (Thr367) is a Phosphothreonine. Positions 367–376 are enriched in acidic residues; the sequence is TIEEDEEEES. Tyr387 is subject to Phosphotyrosine. Ser389 and Ser395 each carry phosphoserine.

Belongs to the CAVIN family. As to quaternary structure, component of the CAVIN complex composed of CAVIN1, CAVIN2, CAVIN3 and CAVIN. Interacts with CAVIN4; this augments the transactivation of NPPA by CAVIN4. Binds to PRKCA in the presence of phosphatidylserine. Interacts with CAVIN1 and CAV3. Post-translationally, the N-terminus is blocked. In terms of processing, phosphorylated on Ser residues.

The protein localises to the cytoplasm. Its subcellular location is the cytosol. It localises to the membrane. It is found in the caveola. Functionally, plays an important role in caveolar biogenesis and morphology. Regulates caveolae morphology by inducing membrane curvature within caveolae. Plays a role in caveola formation in a tissue-specific manner. Required for the formation of caveolae in the lung and fat endothelia but not in the heart endothelia. Negatively regulates the size or stability of CAVIN complexes in the lung endothelial cells. May play a role in targeting PRKCA to caveolae. The sequence is that of Caveolae-associated protein 2 from Rattus norvegicus (Rat).